We begin with the raw amino-acid sequence, 162 residues long: General odorant-binding protein 2 (162 aa).

Positions 1–18 (MTSKSCLLLVAMVTLTTS) are cleaved as a signal peptide. 3 cysteine pairs are disulfide-bonded: Cys-40–Cys-75, Cys-71–Cys-129, and Cys-118–Cys-138.

This sequence belongs to the PBP/GOBP family. Antenna.

Functionally, present in the aqueous fluid surrounding olfactory sensory dendrites and are thought to aid in the capture and transport of hydrophobic odorants into and through this fluid. This is General odorant-binding protein 2 from Heliothis virescens (Tobacco budworm moth).